Consider the following 699-residue polypeptide: Methylcrotonoyl-CoA carboxylase subunit alpha, mitochondrial (699 aa).

The 446-residue stretch at 30–475 folds into the Biotin carboxylation domain; that stretch reads ITKILIANRG…ETGFIPIHRE (446 aa). ATP is bound by residues Lys-144, Glu-228, and His-263. The 198-residue stretch at 148 to 345 folds into the ATP-grasp domain; sequence KDIMIKAGVP…LVEWQLKVAE (198 aa). The active site involves Arg-320. The Biotinyl-binding domain occupies 624–699; the sequence is KGADGVLGSL…EDKKTLAVIV (76 aa). Lys-665 bears the N6-biotinyllysine mark.

In terms of assembly, probably a dodecamer composed of six biotin-containing alpha subunits and six beta subunits. Requires Mn(2+) as cofactor. Biotin serves as cofactor.

It localises to the mitochondrion matrix. The catalysed reaction is 3-methylbut-2-enoyl-CoA + hydrogencarbonate + ATP = 3-methyl-(2E)-glutaconyl-CoA + ADP + phosphate + H(+). The protein operates within amino-acid degradation; L-leucine degradation; (S)-3-hydroxy-3-methylglutaryl-CoA from 3-isovaleryl-CoA: step 2/3. Functionally, biotin-attachment subunit of the 3-methylcrotonyl-CoA carboxylase, an enzyme that catalyzes the conversion of 3-methylcrotonyl-CoA to 3-methylglutaconyl-CoA, a critical step for leucine and isovaleric acid catabolism. The sequence is that of Methylcrotonoyl-CoA carboxylase subunit alpha, mitochondrial (mccA) from Dictyostelium discoideum (Social amoeba).